Here is a 503-residue protein sequence, read N- to C-terminus: Transcriptional regulator LovE (503 aa).

Residues 1 to 14 (MAADQGTFTTSVTL) show a composition bias toward polar residues. Positions 1 to 21 (MAADQGTFTTSVTLSPVEGSR) are disordered. The segment at residues 35–67 (CDRCHAQKIKCTGNKEVTARAPCQRCQQAGLRC) is a DNA-binding region (zn(2)-C6 fungal-type). Disordered stretches follow at residues 89–124 (ADPDPCLHMSSPPVPSQSLPLDVSESHSSNTSRQFL) and 331–362 (SHMNPWEGSRSESPSRDDTSSTSGHSSVDTIP). Positions 339 to 349 (SRSESPSRDDT) are enriched in basic and acidic residues. Over residues 350-359 (SSTSGHSSVD) the composition is skewed to polar residues.

It is found in the nucleus. Its function is as follows. Transcription factor that regulates the expression of the he gene cluster that mediates the biosynthesis of lovastatin (also known as mevinolin, mevacor or monacolin K), a hypolipidemic inhibitor of (3S)-hydroxymethylglutaryl-coenzyme A (HMG-CoA) reductase (HMGR). The protein is Transcriptional regulator LovE of Aspergillus terreus (strain NIH 2624 / FGSC A1156).